The primary structure comprises 150 residues: Protein ADM2 (150 aa).

Positions 1 to 25 (MAQLLMVTVTLGCISLLYLLPGTLS) are cleaved as a signal peptide. Positions 26-100 (GSLGKGLRHS…HPGPQRPTGS (75 aa)) are excised as a propeptide. Positions 28 to 102 (LGKGLRHSRP…GPQRPTGSRR (75 aa)) are disordered. Cys112 and Cys117 are disulfide-bonded. A Tyrosine amide modification is found at Tyr149.

The protein belongs to the adrenomedullin family. As to expression, high expression detected in the submaxillary gland, kidney, stomach, and mesentery, followed by the pituitary, lung, pancreas, intestines, spleen, thymus and ovary. Expressed mainly in the intermediate lobe of the pituitary, with sporadic in the anterior lobe.

Its subcellular location is the secreted. Functionally, intermedin/ADM2 is a peptide hormone that plays a role as physiological regulator of gastrointestinal and cardiovascular bioactivities mediated by the CALCRL-RAMPs receptor complexes. Activates the cAMP-dependent pathway through interaction with CALCRL-RAMP3 receptor complex. This Mus musculus (Mouse) protein is Protein ADM2.